The following is a 279-amino-acid chain: Shikimate dehydrogenase (NADP(+)) (279 aa).

Residues 16–18 (SRS) and threonine 63 contribute to the shikimate site. The active-site Proton acceptor is the lysine 67. Residues asparagine 88 and aspartate 103 each contribute to the shikimate site. NADP(+) contacts are provided by residues 128-132 (GAGGA) and methionine 219. Position 221 (tyrosine 221) interacts with shikimate. Glycine 243 is an NADP(+) binding site.

Belongs to the shikimate dehydrogenase family. Homodimer.

The catalysed reaction is shikimate + NADP(+) = 3-dehydroshikimate + NADPH + H(+). It participates in metabolic intermediate biosynthesis; chorismate biosynthesis; chorismate from D-erythrose 4-phosphate and phosphoenolpyruvate: step 4/7. Involved in the biosynthesis of the chorismate, which leads to the biosynthesis of aromatic amino acids. Catalyzes the reversible NADPH linked reduction of 3-dehydroshikimate (DHSA) to yield shikimate (SA). The chain is Shikimate dehydrogenase (NADP(+)) from Aromatoleum aromaticum (strain DSM 19018 / LMG 30748 / EbN1) (Azoarcus sp. (strain EbN1)).